A 1684-amino-acid polypeptide reads, in one-letter code: Protein Wiz (1684 aa).

Positions methionine 1–alanine 77 are disordered. Positions aspartate 13–isoleucine 24 are enriched in basic and acidic residues. 5 consecutive C2H2-type zinc fingers follow at residues phenylalanine 308–histidine 330, leucine 345–histidine 367, asparagine 454–histidine 477, arginine 734–histidine 756, and methionine 802–histidine 824. Positions leucine 854 to proline 876 are disordered. Residues threonine 903–histidine 925 form a C2H2-type 6 zinc finger. Residues lysine 916, lysine 972, lysine 988, lysine 1000, and lysine 1021 each participate in a glycyl lysine isopeptide (Lys-Gly) (interchain with G-Cter in SUMO2) cross-link. A disordered region spans residues phenylalanine 1005–proline 1072. The residue at position 1029 (serine 1029) is a Phosphoserine. Threonine 1031 bears the Phosphothreonine mark. Residues lysine 1033 and lysine 1038 each participate in a glycyl lysine isopeptide (Lys-Gly) (interchain with G-Cter in SUMO2) cross-link. Residues serine 1039 and serine 1045 each carry the phosphoserine modification. Polar residues predominate over residues proline 1040–glutamine 1057. Threonine 1049 is modified (phosphothreonine). Phosphoserine is present on residues serine 1050 and serine 1058. The interaction with CTBP1 and CTBP2 1 stretch occupies residues proline 1063–threonine 1067. The C2H2-type 7 zinc-finger motif lies at isoleucine 1076–histidine 1098. Residue lysine 1089 forms a Glycyl lysine isopeptide (Lys-Gly) (interchain with G-Cter in SUMO2) linkage. Residues serine 1112 and serine 1139 each carry the phosphoserine modification. Residues serine 1127–lysine 1208 are disordered. Residues lysine 1141 and lysine 1145 each participate in a glycyl lysine isopeptide (Lys-Gly) (interchain with G-Cter in SUMO2) cross-link. 3 positions are modified to phosphoserine: serine 1155, serine 1160, and serine 1167. Glycyl lysine isopeptide (Lys-Gly) (interchain with G-Cter in SUMO2) cross-links involve residues lysine 1171 and lysine 1172. Phosphoserine is present on residues serine 1179 and serine 1184. N6,N6,N6-trimethyllysine; by EHMT2; alternate is present on lysine 1195. Position 1195 is an N6,N6-dimethyllysine; by EHMT2; alternate (lysine 1195). Lysine 1210 participates in a covalent cross-link: Glycyl lysine isopeptide (Lys-Gly) (interchain with G-Cter in SUMO2). The interaction with CTBP1 and CTBP2 2 stretch occupies residues proline 1247–serine 1251. A C2H2-type 8 zinc finger spans residues isoleucine 1260–histidine 1282. Lysine 1273 is covalently cross-linked (Glycyl lysine isopeptide (Lys-Gly) (interchain with G-Cter in SUMO2)). A Phosphoserine modification is found at serine 1296. A Glycyl lysine isopeptide (Lys-Gly) (interchain with G-Cter in SUMO2) cross-link involves residue lysine 1315. Positions alanine 1320–glycine 1384 are disordered. Residues alanine 1335–serine 1351 are compositionally biased toward low complexity. 2 positions are modified to phosphoserine: serine 1342 and serine 1347. Glycyl lysine isopeptide (Lys-Gly) (interchain with G-Cter in SUMO2) cross-links involve residues lysine 1376, lysine 1389, lysine 1403, lysine 1405, and lysine 1415. Residues alanine 1430–histidine 1452 form a C2H2-type 9 zinc finger. Residues lysine 1481, lysine 1497, and lysine 1510 each participate in a glycyl lysine isopeptide (Lys-Gly) (interchain with G-Cter in SUMO2) cross-link. Disordered stretches follow at residues threonine 1496–valine 1587 and glutamine 1592–valine 1611. At serine 1550 the chain carries Phosphoserine. Lysine 1556 is covalently cross-linked (Glycyl lysine isopeptide (Lys-Gly) (interchain with G-Cter in SUMO1); alternate). Lysine 1556 is covalently cross-linked (Glycyl lysine isopeptide (Lys-Gly) (interchain with G-Cter in SUMO2); alternate). Residues lysine 1556–arginine 1574 are compositionally biased toward basic and acidic residues. Residues lysine 1567 and lysine 1593 each participate in a glycyl lysine isopeptide (Lys-Gly) (interchain with G-Cter in SUMO2) cross-link. The span at glutamine 1599–valine 1611 shows a compositional bias: pro residues. The segment at leucine 1629–histidine 1655 adopts a C2H2-type 10 zinc-finger fold. Positions serine 1662–proline 1684 are disordered. Lysine 1663 is covalently cross-linked (Glycyl lysine isopeptide (Lys-Gly) (interchain with G-Cter in SUMO2)). Positions glutamine 1672 to proline 1684 are enriched in low complexity.

This sequence belongs to the krueppel C2H2-type zinc-finger protein family. As to quaternary structure, part of a complex containing at least CDYL, REST, WIZ, SETB1, EHMT1 and EHMT2. Interacts with EHMT1, EHMT2, CTBP1 and CTBP2. In terms of tissue distribution, according to PubMed:9795207, isoform L and isoform S are brain-specific. According to PubMed:16702210, isoform S is ubiquitously expressed.

The protein resides in the nucleus. May link EHMT1 and EHMT2 histone methyltransferases to the CTBP corepressor machinery. May be involved in EHMT1-EHMT2 heterodimer formation and stabilization. The sequence is that of Protein Wiz (Wiz) from Mus musculus (Mouse).